We begin with the raw amino-acid sequence, 382 residues long: MHPIVIVGTGLAGFNTVKEFRKLDKETPIVMLTADDGRNYSKPMLSAGFSKGKTADDLCMATPEKVAEQLNVDVRTGVHVAGIDATNKRVLLPDDHLDYSKLVLALGADTWTPPLEGDAVGEVFSVNDLMDYGKFRAAVEGKKTVTILGGGLIGCEFANDLSNGGFKVSLVEPMGRCLPLLLPEQASEAVGRGLADLGVQFHFGPLAKAVHHGDNGQLVTELSDGSQLESDVVLSAIGLRPRISLAKEAGLDTNRGILTDKSLRTSAEHIYALGDCAEVQGHVLPYVLPLMASARALAKTLAGETTEVSYGVMPVTIKTPACPVVVCPAAEGSEGAWEVEAEGNTVQALFRSKDGSLLGYALTGEAVKEKMKLNKELPAIMP.

FAD contacts are provided by residues 9–12, 33–34, Lys42, Val80, Glu156, Asp275, Val287, and Lys318; these read TGLA and TA.

Belongs to the FAD-dependent oxidoreductase family. As to quaternary structure, homodimer. FAD serves as cofactor.

The protein localises to the cytoplasm. It carries out the reaction 2 reduced [rubredoxin] + NAD(+) + H(+) = 2 oxidized [rubredoxin] + NADH. The protein operates within hydrocarbon metabolism; alkane degradation. Its function is as follows. Involved in the hydrocarbon hydroxylating system, which transfers electrons from NADH to rubredoxin reductase and then through rubredoxin to alkane 1 monooxygenase. This Alcanivorax borkumensis (strain ATCC 700651 / DSM 11573 / NCIMB 13689 / SK2) protein is Rubredoxin-NAD(+) reductase (rubB).